The sequence spans 1486 residues: MIERGKFRSLTLINWNGFFARTFDLDELVTTLSGGNGAGKSTTMAAFVTALIPDLTLLHFRNTTEAGATSGSRDKGLHGKLKAGVCYSMLDTINSRHQRVVVGVRLQQVAGRDRKVDIKPFAIQGLPMSVQPTQLVTETLNERQARVLPLNELKDKLEAMEGVQFKQFNSITDYHSLMFDLGIIARRLRSASDRSKFYRLIEASLYGGISSAITRSLRDYLLPENSGVRKAFQDMEAALRENRMTLEAIRVTQSDRDLFKHLISEATNYVAADYMRHANERRVHLDKALEFRRELHTSRQQLAAEQYKHVDMARELAEHNGAEGDLEADYQAASDHLNLVQTALRQQEKIERYEADLDELQIRLEEQNEVVAEAIERQEENEARAEAAELEVDELKSQLADYQQALDVQQTRAIQYNQAIAALNRAKELCHLPDLTADSAAEWLETFQAKELEATEKMLSLEQKMSMAQTAHSQFEQAYQLVVAINGPLARNEAWDVARELLREGVDQRHLAEQVQPLRMRLSELEQRLREQQEAERLLADFCKRQGKNFDIDELEALHQELEARIASLSDSVSNAREERMALRQEQEQLQSRIQSLMQRAPVWLAAQNSLNQLSEQCGEEFTSSQDVTEYLQQLLEREREAIVERDEVGARKNAVDEEIERLSQPGGSEDQRLNALAERFGGVLLSEIYDDVSLEDAPYFSALYGPSRHAIVVPDLSQVTEHLDGLTDCPEDLYLIEGDPQSFDDSVFSVDELEKAVVVKIADRQWRYSRFPEVPLFGRAARESRIESLHAEREVLSERFATLSFDVQKTQRLHQAFSRFIGSHLAVVFESDPEAEIRQLNSRRVELERALSNHENDNQQQRIQFEQAKEGVTALNRILPRLNLLADDSLADRVDEIRERLDEAQEAARFVQQFGNQLAKLEPIVSVLQSDPEQFEQLKEDYAYSQQMQRDARQQAFALTEVVQRRAHFSYSDSAEMLSGNSDLNEKLRERLEQAEAERTRAREALRGHAAQLSQYNQVLASLKSSYDTKKELLNDLQRELQDIGVCADSGAEERARIRRDELHAQLSNNRSRRNQLEKALTFCEAEMDNLTRKLRKLERDYFEMREQVVTAKAGWCAVMRMVKDNGVERRLHRRELAYLSADDLRSMSDKALGALRLAVADNEHLRDVLRMSEDPKRPERKIQFFVAAYQHLRERIRQDIIRTDDPVEAIEQMEIELSRLTEELTSREQKLVISSRSVANIIRKTIQREQNRIRMLNQGLQNVSFGQVNSVRLNVNVRETHAMLLDVLSEQHEQHQDLFNSNRLTFSEALAKLYQRLNPQIDMGQRTPQTIGEELLDYRNYLEMEVEVNRGSDGWLRAESGALSTGEAIGTGMSILVMVVQSWEDESRRLRGKDISPCRLLFLDEAARLDARSIATLFELCERLQMQLIIAAPENISPEKGTTYKLVRKVFQNTEHVHVVGLRGFAPQLPETLPGTDEAPSQAS.

Gly-34–Ser-41 contacts ATP. Coiled coils occupy residues Leu-326–Gln-418, Leu-444–Gln-480, and Arg-509–Val-603. Residues Pro-666–Arg-783 form a flexible hinge region. Coiled coils occupy residues Glu-835–Glu-923, Glu-977–Ala-1115, and Val-1209–Ser-1266.

This sequence belongs to the SMC family. MukB subfamily. In terms of assembly, homodimerization via its hinge domain. Binds to DNA via its C-terminal region. Interacts, and probably forms a ternary complex, with MukE and MukF via its C-terminal region. The complex formation is stimulated by calcium or magnesium. Interacts with tubulin-related protein FtsZ.

Its subcellular location is the cytoplasm. It is found in the nucleoid. Plays a central role in chromosome condensation, segregation and cell cycle progression. Functions as a homodimer, which is essential for chromosome partition. Involved in negative DNA supercoiling in vivo, and by this means organize and compact chromosomes. May achieve or facilitate chromosome segregation by condensation DNA from both sides of a centrally located replisome during cell division. The sequence is that of Chromosome partition protein MukB from Shigella boydii serotype 4 (strain Sb227).